Here is a 395-residue protein sequence, read N- to C-terminus: Elongation factor Tu (395 aa).

Residues 10 to 205 (KPHCNIGTIG…AVDSYIPQPE (196 aa)) form the tr-type G domain. The interval 19 to 26 (GHVDHGKT) is G1. 19 to 26 (GHVDHGKT) lines the GTP pocket. Residue Thr26 participates in Mg(2+) binding. A G2 region spans residues 60–64 (GITIA). The G3 stretch occupies residues 81–84 (DCPG). GTP contacts are provided by residues 81–85 (DCPGH) and 136–139 (NKMD). The tract at residues 136 to 139 (NKMD) is G4. A G5 region spans residues 173 to 175 (SAL).

The protein belongs to the TRAFAC class translation factor GTPase superfamily. Classic translation factor GTPase family. EF-Tu/EF-1A subfamily. In terms of assembly, monomer.

It is found in the cytoplasm. The enzyme catalyses GTP + H2O = GDP + phosphate + H(+). In terms of biological role, GTP hydrolase that promotes the GTP-dependent binding of aminoacyl-tRNA to the A-site of ribosomes during protein biosynthesis. This is Elongation factor Tu from Acidiphilium cryptum (strain JF-5).